The chain runs to 206 residues: MSKSYTLKAEIRERVGKGSSRELRRNGLIPAVIYGDKQPPLAIAVSYKDIFYKIHAGGFRTTVATLAIDKQKIMVLPKDYQLDPVRDFPLHVDFLRISAKSIVEVNIPVHFLNEDSAPGLKKGGVLNIVRHEIECTAPANAIPEAIEIDLSSYSIGDSIHISAVQLPKDVNPVIQDRDFTIATIVAPADMDVSDEVSEQENNEESE.

The protein belongs to the bacterial ribosomal protein bL25 family. CTC subfamily. Part of the 50S ribosomal subunit; part of the 5S rRNA/L5/L18/L25 subcomplex. Contacts the 5S rRNA. Binds to the 5S rRNA independently of L5 and L18.

Its function is as follows. This is one of the proteins that binds to the 5S RNA in the ribosome where it forms part of the central protuberance. The chain is Large ribosomal subunit protein bL25 from Bartonella henselae (strain ATCC 49882 / DSM 28221 / CCUG 30454 / Houston 1) (Rochalimaea henselae).